Consider the following 134-residue polypeptide: Iron-sulfur cluster insertion protein ErpA (134 aa).

Cys-47, Cys-126, and Cys-128 together coordinate iron-sulfur cluster.

It belongs to the HesB/IscA family. In terms of assembly, homodimer. The cofactor is iron-sulfur cluster.

In terms of biological role, required for insertion of 4Fe-4S clusters for at least IspG. This is Iron-sulfur cluster insertion protein ErpA from Coxiella burnetii (strain Dugway 5J108-111).